Reading from the N-terminus, the 273-residue chain is Acetyl-coenzyme A carboxylase carboxyl transferase subunit alpha (273 aa).

Positions 1–244 (MKKATQSKAW…KVVLKQALDE (244 aa)) constitute a CoA carboxyltransferase C-terminal domain.

It belongs to the AccA family. As to quaternary structure, acetyl-CoA carboxylase is a heterohexamer composed of biotin carboxyl carrier protein (AccB), biotin carboxylase (AccC) and two subunits each of ACCase subunit alpha (AccA) and ACCase subunit beta (AccD).

It is found in the cytoplasm. It catalyses the reaction N(6)-carboxybiotinyl-L-lysyl-[protein] + acetyl-CoA = N(6)-biotinyl-L-lysyl-[protein] + malonyl-CoA. It participates in lipid metabolism; malonyl-CoA biosynthesis; malonyl-CoA from acetyl-CoA: step 1/1. Functionally, component of the acetyl coenzyme A carboxylase (ACC) complex. First, biotin carboxylase catalyzes the carboxylation of biotin on its carrier protein (BCCP) and then the CO(2) group is transferred by the carboxyltransferase to acetyl-CoA to form malonyl-CoA. The polypeptide is Acetyl-coenzyme A carboxylase carboxyl transferase subunit alpha (Acinetobacter baumannii (strain AB0057)).